Here is a 315-residue protein sequence, read N- to C-terminus: DNA-directed RNA polymerase subunit alpha (315 aa).

Positions 1-228 are alpha N-terminal domain (alpha-NTD); it reads MLEIEKPKIE…EHLRLFIGLT (228 aa). The alpha C-terminal domain (alpha-CTD) stretch occupies residues 246–315; it reads DKILEMTIEE…LGLSLRQEDE (70 aa).

This sequence belongs to the RNA polymerase alpha chain family. As to quaternary structure, homodimer. The RNAP catalytic core consists of 2 alpha, 1 beta, 1 beta' and 1 omega subunit. When a sigma factor is associated with the core the holoenzyme is formed, which can initiate transcription.

It carries out the reaction RNA(n) + a ribonucleoside 5'-triphosphate = RNA(n+1) + diphosphate. DNA-dependent RNA polymerase catalyzes the transcription of DNA into RNA using the four ribonucleoside triphosphates as substrates. In Desulforamulus reducens (strain ATCC BAA-1160 / DSM 100696 / MI-1) (Desulfotomaculum reducens), this protein is DNA-directed RNA polymerase subunit alpha.